The sequence spans 231 residues: 7-cyano-7-deazaguanine synthase (231 aa).

8–18 (FSGGQDSTTCL) lines the ATP pocket. Residues Cys188, Cys197, Cys200, and Cys203 each coordinate Zn(2+).

The protein belongs to the QueC family. Zn(2+) is required as a cofactor.

The catalysed reaction is 7-carboxy-7-deazaguanine + NH4(+) + ATP = 7-cyano-7-deazaguanine + ADP + phosphate + H2O + H(+). Its pathway is purine metabolism; 7-cyano-7-deazaguanine biosynthesis. In terms of biological role, catalyzes the ATP-dependent conversion of 7-carboxy-7-deazaguanine (CDG) to 7-cyano-7-deazaguanine (preQ(0)). This is 7-cyano-7-deazaguanine synthase from Salmonella paratyphi A (strain ATCC 9150 / SARB42).